Reading from the N-terminus, the 381-residue chain is MHILADENIPLVDEFFAGLGEIRRMPGRRINRAALEGVDVLLVRSVTRVDRELLQGTAVRFVGTCTIGTDHLDLDYFEQSGIDWASAPGCNARGVVDYVLGCLLALAEVRGEALARRRFGVVGAGEVGGRLVEVLRGLGWDVRVCDPPRQTREAGGFVTLDEVIAECDVISLHTPLSMSGDCPTFHLFDRQRLSGLRPGAWLINASRGAVVDNAALRDLLLQRPDLEAVLDVWEGEPQVDVELADLCRIATPHIAGYSLDGKLRGTAQIHAAYCAARGLEPTVELAQLMPGPALAGLTFAASAEPAEMLATLCRAVYDPRRDDADFRRSLQGDDAQRRAAFDLLRKAYPARREIDGLAVRIEGDNPALTAVVSALGARLLR.

Residues S45 and T66 each contribute to the substrate site. NAD(+)-binding positions include D146, T174, 205–207 (ASR), and D231. Residue R207 is part of the active site. Residue E236 is part of the active site. H253 acts as the Proton donor in catalysis. G256 serves as a coordination point for NAD(+). Residue Y257 coordinates substrate.

This sequence belongs to the D-isomer specific 2-hydroxyacid dehydrogenase family. PdxB subfamily. In terms of assembly, homodimer.

It localises to the cytoplasm. The enzyme catalyses 4-phospho-D-erythronate + NAD(+) = (R)-3-hydroxy-2-oxo-4-phosphooxybutanoate + NADH + H(+). The protein operates within cofactor biosynthesis; pyridoxine 5'-phosphate biosynthesis; pyridoxine 5'-phosphate from D-erythrose 4-phosphate: step 2/5. In terms of biological role, catalyzes the oxidation of erythronate-4-phosphate to 3-hydroxy-2-oxo-4-phosphonooxybutanoate. This chain is Erythronate-4-phosphate dehydrogenase, found in Stutzerimonas stutzeri (strain A1501) (Pseudomonas stutzeri).